Consider the following 232-residue polypeptide: Ubiquinone biosynthesis O-methyltransferase (232 aa).

R36, G55, D76, and M120 together coordinate S-adenosyl-L-methionine.

This sequence belongs to the methyltransferase superfamily. UbiG/COQ3 family.

It catalyses the reaction a 3-demethylubiquinol + S-adenosyl-L-methionine = a ubiquinol + S-adenosyl-L-homocysteine + H(+). The enzyme catalyses a 3-(all-trans-polyprenyl)benzene-1,2-diol + S-adenosyl-L-methionine = a 2-methoxy-6-(all-trans-polyprenyl)phenol + S-adenosyl-L-homocysteine + H(+). It functions in the pathway cofactor biosynthesis; ubiquinone biosynthesis. Its function is as follows. O-methyltransferase that catalyzes the 2 O-methylation steps in the ubiquinone biosynthetic pathway. The sequence is that of Ubiquinone biosynthesis O-methyltransferase from Paraburkholderia phytofirmans (strain DSM 17436 / LMG 22146 / PsJN) (Burkholderia phytofirmans).